The primary structure comprises 84 residues: Small ribosomal subunit protein uS17 (84 aa).

Belongs to the universal ribosomal protein uS17 family. Part of the 30S ribosomal subunit.

Functionally, one of the primary rRNA binding proteins, it binds specifically to the 5'-end of 16S ribosomal RNA. The polypeptide is Small ribosomal subunit protein uS17 (Treponema pallidum (strain Nichols)).